Here is a 197-residue protein sequence, read N- to C-terminus: Xanthine phosphoribosyltransferase (197 aa).

Xanthine is bound by residues Leu-20 and Asn-27. 128–132 serves as a coordination point for 5-phospho-alpha-D-ribose 1-diphosphate; it reads ANGQA. Lys-156 is a xanthine binding site.

The protein belongs to the purine/pyrimidine phosphoribosyltransferase family. Xpt subfamily. Homodimer.

The protein localises to the cytoplasm. It catalyses the reaction XMP + diphosphate = xanthine + 5-phospho-alpha-D-ribose 1-diphosphate. It participates in purine metabolism; XMP biosynthesis via salvage pathway; XMP from xanthine: step 1/1. Functionally, converts the preformed base xanthine, a product of nucleic acid breakdown, to xanthosine 5'-monophosphate (XMP), so it can be reused for RNA or DNA synthesis. This is Xanthine phosphoribosyltransferase from Bacillus cytotoxicus (strain DSM 22905 / CIP 110041 / 391-98 / NVH 391-98).